A 445-amino-acid polypeptide reads, in one-letter code: MHGSPPAQALNQAVPDPSPELLARASSLRRHAIDLAQCSDQQRQEALRAMADALEQQREAILLANQDDLQAAEQEQLAPALLSRLKLDRTKLDGAIAGIRQLAQLPDPLAQRQLHRALDEGLVLERISVPLGVVGVIFEARPDAVMQIAALAIRSGNGAILKGGREANRSCSAILAALQQGLARSAVHPDVLTLLTSREESLALLKLDGLVDLIIPRGSNALVQFIQDNTRIPVLGHADGICHLYVDRQVDLDQAVAVAVDSKAQYPAACNAIETLLLHKEIAPAFLAAALPAFAQAGVELRGDGAAMALGVSQSASDDDWATEYLDLVLSIRVVDSMDEALEHIARYSSRHTEVICTTNTETAERFLARVDSAGVYQNCSSRFADGFRYGFGAEVGISTQTLPPRGPVGLEGLVTYRYRLRGDGHIAADYASGARQFTHQNLPL.

It belongs to the gamma-glutamyl phosphate reductase family.

It is found in the cytoplasm. The enzyme catalyses L-glutamate 5-semialdehyde + phosphate + NADP(+) = L-glutamyl 5-phosphate + NADPH + H(+). Its pathway is amino-acid biosynthesis; L-proline biosynthesis; L-glutamate 5-semialdehyde from L-glutamate: step 2/2. Its function is as follows. Catalyzes the NADPH-dependent reduction of L-glutamate 5-phosphate into L-glutamate 5-semialdehyde and phosphate. The product spontaneously undergoes cyclization to form 1-pyrroline-5-carboxylate. The polypeptide is Gamma-glutamyl phosphate reductase (Synechococcus sp. (strain RCC307)).